We begin with the raw amino-acid sequence, 118 residues long: Small ribosomal subunit protein uS13 (118 aa).

The disordered stretch occupies residues 92 to 118; it reads RKGLPVRGQRTKTNARTRKGPRKPIRK.

Belongs to the universal ribosomal protein uS13 family. In terms of assembly, part of the 30S ribosomal subunit. Forms a loose heterodimer with protein S19. Forms two bridges to the 50S subunit in the 70S ribosome.

In terms of biological role, located at the top of the head of the 30S subunit, it contacts several helices of the 16S rRNA. In the 70S ribosome it contacts the 23S rRNA (bridge B1a) and protein L5 of the 50S subunit (bridge B1b), connecting the 2 subunits; these bridges are implicated in subunit movement. Contacts the tRNAs in the A and P-sites. In Pseudomonas putida (strain ATCC 700007 / DSM 6899 / JCM 31910 / BCRC 17059 / LMG 24140 / F1), this protein is Small ribosomal subunit protein uS13.